Reading from the N-terminus, the 447-residue chain is UDP-N-acetylmuramoylalanine--D-glutamate ligase (447 aa).

112-118 (GTNGKST) contributes to the ATP binding site.

It belongs to the MurCDEF family.

It localises to the cytoplasm. The catalysed reaction is UDP-N-acetyl-alpha-D-muramoyl-L-alanine + D-glutamate + ATP = UDP-N-acetyl-alpha-D-muramoyl-L-alanyl-D-glutamate + ADP + phosphate + H(+). It functions in the pathway cell wall biogenesis; peptidoglycan biosynthesis. Its function is as follows. Cell wall formation. Catalyzes the addition of glutamate to the nucleotide precursor UDP-N-acetylmuramoyl-L-alanine (UMA). The protein is UDP-N-acetylmuramoylalanine--D-glutamate ligase of Legionella pneumophila (strain Lens).